The sequence spans 102 residues: Small ribosomal subunit protein uS14 (102 aa).

It belongs to the universal ribosomal protein uS14 family. As to quaternary structure, part of the 30S ribosomal subunit. Contacts proteins S3 and S10.

Its function is as follows. Binds 16S rRNA, required for the assembly of 30S particles and may also be responsible for determining the conformation of the 16S rRNA at the A site. The chain is Small ribosomal subunit protein uS14 from Wolbachia pipientis subsp. Culex pipiens (strain wPip).